The primary structure comprises 342 residues: MIKTCIVGASGYTGAELASLIHRHPRFELNALYVSAKSQDADKKLGDVHGYLFGQINLPLIPLTDDVLHSLSNEMDVIFLATPHEASHDWMPVLSSGKAKVFDLSGAFRLKDQQVFADYYGFAHEQAASLKQAVYGLADWFAEDIKSADIIAVPGCYPTASLSALKPLHEAGLIADGHLPIINAVSGVSGAGRKAAMGSSFCEVSLQAYGVLGHRHQPEISAYLGREVIFTPHLGNFKRGILATITVKVNADVDAGAVANAFSHAYQNHPIVRIRDTWPKLDDVVGTPHCDLFWKLDTQKGYLVVTSAIDNLLKGAASQAVQCANLRFGFASQLGLVHEVSA.

Residue Cys-156 is part of the active site.

It belongs to the NAGSA dehydrogenase family. Type 1 subfamily.

Its subcellular location is the cytoplasm. It carries out the reaction N-acetyl-L-glutamate 5-semialdehyde + phosphate + NADP(+) = N-acetyl-L-glutamyl 5-phosphate + NADPH + H(+). Its pathway is amino-acid biosynthesis; L-arginine biosynthesis; N(2)-acetyl-L-ornithine from L-glutamate: step 3/4. In terms of biological role, catalyzes the NADPH-dependent reduction of N-acetyl-5-glutamyl phosphate to yield N-acetyl-L-glutamate 5-semialdehyde. This is N-acetyl-gamma-glutamyl-phosphate reductase from Pseudoalteromonas atlantica (strain T6c / ATCC BAA-1087).